The primary structure comprises 632 residues: Threonine--tRNA ligase (632 aa).

The region spanning 1–61 is the TGS domain; it reads MPIITLPDGT…KTDANLAIIT (61 aa). The catalytic stretch occupies residues 242–533; it reads DHRKIGKIQD…LIEHYEGAYP (292 aa). Residues C333, H384, and H510 each coordinate Zn(2+).

Belongs to the class-II aminoacyl-tRNA synthetase family. In terms of assembly, homodimer. Zn(2+) serves as cofactor.

It localises to the cytoplasm. It catalyses the reaction tRNA(Thr) + L-threonine + ATP = L-threonyl-tRNA(Thr) + AMP + diphosphate + H(+). Its function is as follows. Catalyzes the attachment of threonine to tRNA(Thr) in a two-step reaction: L-threonine is first activated by ATP to form Thr-AMP and then transferred to the acceptor end of tRNA(Thr). Also edits incorrectly charged L-seryl-tRNA(Thr). The sequence is that of Threonine--tRNA ligase from Ruthia magnifica subsp. Calyptogena magnifica.